A 153-amino-acid chain; its full sequence is Ribonuclease VapC6 (153 aa).

The PINc domain maps to 6 to 152 (VFIDSSVMVG…EKVDFIEIIK (147 aa)). Residues Asp-9 and Asp-120 each contribute to the Mg(2+) site.

It belongs to the PINc/VapC protein family. The cofactor is Mg(2+).

Its function is as follows. Toxic component of a type II toxin-antitoxin (TA) system. An RNase. This Methanocaldococcus jannaschii (strain ATCC 43067 / DSM 2661 / JAL-1 / JCM 10045 / NBRC 100440) (Methanococcus jannaschii) protein is Ribonuclease VapC6.